Reading from the N-terminus, the 533-residue chain is Apolipoprotein N-acyltransferase (533 aa).

5 helical membrane passes run 17–37 (FFLPLLSGLLLGISFPTWPAV), 72–92 (LLFCLIALWWVCLATFVGGIL), 116–136 (GFRSALLALPFIWTGWEWAYM), 165–185 (GVWGVSFWLLTFNVLVLLLFM), and 190–210 (FQVKVGIVMVMLVMIATPLLY). A CN hydrolase domain is found at 232 to 499 (VQPDIDPHEK…QSVLTADVPL (268 aa)). Glu274 acts as the Proton acceptor in catalysis. Residue Lys352 is part of the active site. Catalysis depends on Cys410, which acts as the Nucleophile. Residues 510-530 (PDLVPHVCLGIAGVLALVAAV) traverse the membrane as a helical segment.

The protein belongs to the CN hydrolase family. Apolipoprotein N-acyltransferase subfamily.

It localises to the cell inner membrane. It catalyses the reaction N-terminal S-1,2-diacyl-sn-glyceryl-L-cysteinyl-[lipoprotein] + a glycerophospholipid = N-acyl-S-1,2-diacyl-sn-glyceryl-L-cysteinyl-[lipoprotein] + a 2-acyl-sn-glycero-3-phospholipid + H(+). The protein operates within protein modification; lipoprotein biosynthesis (N-acyl transfer). In terms of biological role, catalyzes the phospholipid dependent N-acylation of the N-terminal cysteine of apolipoprotein, the last step in lipoprotein maturation. This Chlorobaculum tepidum (strain ATCC 49652 / DSM 12025 / NBRC 103806 / TLS) (Chlorobium tepidum) protein is Apolipoprotein N-acyltransferase.